Here is a 159-residue protein sequence, read N- to C-terminus: Stress-induced protein 1 (159 aa).

The region spanning 33–141 is the sHSP domain; it reads NNFNNIVPQQ…TVRALPIHTS (109 aa).

This sequence belongs to the small heat shock protein (HSP20) family.

This chain is Stress-induced protein 1, found in Caenorhabditis elegans.